Here is a 274-residue protein sequence, read N- to C-terminus: Aliphatic sulfonates import ATP-binding protein SsuB 2 (274 aa).

The 222-residue stretch at 21–242 (LALRGVARRF…SRGSARLAAL (222 aa)) folds into the ABC transporter domain. Residue 53–60 (GRSGCGKS) participates in ATP binding.

It belongs to the ABC transporter superfamily. Aliphatic sulfonates importer (TC 3.A.1.17.2) family. As to quaternary structure, the complex is composed of two ATP-binding proteins (SsuB), two transmembrane proteins (SsuC) and a solute-binding protein (SsuA).

The protein resides in the cell inner membrane. The catalysed reaction is ATP + H2O + aliphatic sulfonate-[sulfonate-binding protein]Side 1 = ADP + phosphate + aliphatic sulfonateSide 2 + [sulfonate-binding protein]Side 1.. Functionally, part of the ABC transporter complex SsuABC involved in aliphatic sulfonates import. Responsible for energy coupling to the transport system. This Pseudomonas aeruginosa (strain UCBPP-PA14) protein is Aliphatic sulfonates import ATP-binding protein SsuB 2.